The primary structure comprises 572 residues: AAA ATPase forming ring-shaped complexes (572 aa).

Low complexity predominate over residues methionine 1–serine 18. The interval methionine 1–leucine 30 is disordered. A coiled-coil region spans residues threonine 42–aspartate 70. Glycine 258–leucine 263 is an ATP binding site. The segment at valine 543–serine 572 is disordered. Positions aspartate 563 to serine 572 are enriched in basic and acidic residues.

The protein belongs to the AAA ATPase family. In terms of assembly, homohexamer. Assembles into a hexameric ring structure.

This chain is AAA ATPase forming ring-shaped complexes, found in Corynebacterium kroppenstedtii (strain DSM 44385 / JCM 11950 / CIP 105744 / CCUG 35717).